A 215-amino-acid polypeptide reads, in one-letter code: PRELI domain-containing protein 1, mitochondrial (215 aa).

A PRELI/MSF1 domain is found at 36–174; that stretch reads TEDIVHREVT…VLARMQGEAP (139 aa).

In terms of assembly, forms a complex with TRIAP1 in the mitochondrion intermembrane space. Expressed within the blood islands and in the liver.

Its subcellular location is the mitochondrion. The protein localises to the mitochondrion intermembrane space. The enzyme catalyses a 1,2-diacyl-sn-glycero-3-phosphate(in) = a 1,2-diacyl-sn-glycero-3-phosphate(out). Its function is as follows. Involved in the modulation of the mitochondrial apoptotic pathway by ensuring the accumulation of cardiolipin (CL) in mitochondrial membranes. The TRIAP1:PRELID1 complex probably functions as a PA transporter across the mitochondrion intermembrane space to provide PA for CL synthesis in the inner membrane. May be involved in hematopoiesis during avian development. The protein is PRELI domain-containing protein 1, mitochondrial (PRELID1) of Gallus gallus (Chicken).